The chain runs to 957 residues: SH3 domain-binding protein 4 (957 aa).

One can recognise an SH3 1 domain in the interval 54–113 (DNVKEVVAIKDYCPNNFTTLKFSKGEHLYVLDTSGGEWWYAHNTTEMGYIPSSYVQPLNY). The ZU5 domain occupies 312–449 (TSIVCRLDSS…LEPVMYVVMV (138 aa)). Residues 649–719 (TSLKYGKLLK…HAKNVLVVGK (71 aa)) form the SH3 2 domain.

Homodimer or homooligomer.

Its subcellular location is the membrane. It localises to the clathrin-coated pit. The protein resides in the cytoplasmic vesicle. It is found in the clathrin-coated vesicle. The protein localises to the nucleus. Functionally, possible role in regulating endocytosis of the transferrin receptor at the plasma membrane. Alternatively, may function as a negative regulator of the amino acid-induced TOR signaling by inhibiting the formation of active Rag GTPase complexes. Preferentially binds inactive Rag GTPase complexes and prevents their interaction with the mTORC1 complex inhibiting its relocalization to lysosomes and its activation. Thereby, may indirectly regulate cell growth, proliferation and autophagy. The polypeptide is SH3 domain-binding protein 4 (sh3bp4) (Xenopus tropicalis (Western clawed frog)).